The primary structure comprises 506 residues: Nostrin (506 aa).

An F-BAR domain is found at methionine 1 to aspartate 260. Serine 114 is modified (phosphoserine). Positions serine 160–leucine 222 form a coiled coil. Positions alanine 292–glutamate 372 constitute an REM-1 domain. Residues leucine 438–serine 497 form the SH3 domain. Serine 479 carries the phosphoserine modification.

In terms of assembly, homotrimer. Interacts with DAB2. Interacts with NOS3, DNM2, WASL and CAV1. Interacts (via SH3 domain) with DNM2; this interaction allows the recruitment of NOS3 to dynamin-positive structures. Expressed at highest levels in heart, kidney, placenta and lung, and at lowest levels in brain, thymus and spleen. Present in vascular endothelial cells and placenta. Over-expressed in placenta from women with pre-eclampsia (at protein level).

It localises to the cell membrane. Its subcellular location is the cytoplasmic vesicle. It is found in the cytoplasm. The protein resides in the cytoskeleton. The protein localises to the nucleus. Its function is as follows. Multivalent adapter protein which may decrease NOS3 activity by inducing its translocation away from the plasma membrane. The protein is Nostrin of Homo sapiens (Human).